The sequence spans 395 residues: Elongation factor Tu (395 aa).

Residues 10 to 204 (KSHVNVGTLG…AVDEYIPTPE (195 aa)) form the tr-type G domain. Residues 19–26 (GHVDHGKT) are G1. 19 to 26 (GHVDHGKT) contributes to the GTP binding site. Thr26 lines the Mg(2+) pocket. The tract at residues 60–64 (GITIS) is G2. Residues 81-84 (DCPG) form a G3 region. Residues 81–85 (DCPGH) and 136–139 (NKTD) contribute to the GTP site. Residues 136–139 (NKTD) form a G4 region. Residues 174-176 (SAL) are G5.

Belongs to the TRAFAC class translation factor GTPase superfamily. Classic translation factor GTPase family. EF-Tu/EF-1A subfamily. Monomer.

It localises to the cytoplasm. The enzyme catalyses GTP + H2O = GDP + phosphate + H(+). GTP hydrolase that promotes the GTP-dependent binding of aminoacyl-tRNA to the A-site of ribosomes during protein biosynthesis. The protein is Elongation factor Tu of Oceanobacillus iheyensis (strain DSM 14371 / CIP 107618 / JCM 11309 / KCTC 3954 / HTE831).